We begin with the raw amino-acid sequence, 360 residues long: Nucleoporin SEH1-A (360 aa).

WD repeat units follow at residues D10 to C49, T55 to K96, D111 to Q152, S160 to A210, S217 to S258, and N276 to C315.

Belongs to the WD repeat SEC13 family. Component of the Nup107-160 subcomplex of the nuclear pore complex (NPC). The Nup107-160 subcomplex includes NUP160, NUP133, NUP107, NUP98, NUP85, NUP43, NUP37, SEH1 and SEC13. Component of the GATOR2 subcomplex, composed of MIOS, SEC13, SEH1L, WDR24 and WDR59. The GATOR2 complex interacts with CASTOR1 and CASTOR2; the interaction is negatively regulated by arginine. The GATOR2 complex interacts with SESN1, SESN2 and SESN3; the interaction is negatively regulated by amino acids.

The protein localises to the chromosome. It localises to the centromere. It is found in the kinetochore. The protein resides in the nucleus. Its subcellular location is the nuclear pore complex. The protein localises to the lysosome membrane. Its activity is regulated as follows. The GATOR2 complex is negatively regulated by the upstream amino acid sensors CASTOR1 and SESN2, which sequester the GATOR2 complex in absence of amino acids. In the presence of abundant amino acids, GATOR2 is released from CASTOR1 and SESN2 and activated. Its function is as follows. Component of the Nup107-160 subcomplex of the nuclear pore complex (NPC). The Nup107-160 subcomplex is required for the assembly of a functional NPC. The Nup107-160 subcomplex is also required for normal kinetochore microtubule attachment, mitotic progression and chromosome segregation. This subunit plays a role in recruitment of the Nup107-160 subcomplex to the kinetochore. In terms of biological role, as a component of the GATOR2 complex, functions as an activator of the amino acid-sensing branch of the mTORC1 signaling pathway. The GATOR2 complex indirectly activates mTORC1 through the inhibition of the GATOR1 subcomplex. GATOR2 probably acts as an E3 ubiquitin-protein ligase toward GATOR1. In the presence of abundant amino acids, the GATOR2 complex mediates ubiquitination of the NPRL2 core component of the GATOR1 complex, leading to GATOR1 inactivation. In the absence of amino acids, GATOR2 is inhibited, activating the GATOR1 complex. In Xenopus laevis (African clawed frog), this protein is Nucleoporin SEH1-A (seh1l-a).